Consider the following 194-residue polypeptide: Ras-like protein rasS (194 aa).

Residue 10 to 17 coordinates GTP; the sequence is GPGGVGKS. The Effector region signature appears at 32-40; sequence YDPTLEDSY. GTP-binding positions include 57–61 and 116–119; these read DTAGQ and NKCD. Residues 168–194 form a disordered region; it reads RQSNQHSNSQEQNTDQPIKKKKSCNLL. The span at 169-180 shows a compositional bias: low complexity; it reads QSNQHSNSQEQN. Cysteine 191 is subject to Cysteine methyl ester. Cysteine 191 carries the S-geranylgeranyl cysteine lipid modification. The propeptide at 192–194 is removed in mature form; that stretch reads NLL.

It belongs to the small GTPase superfamily. Ras family.

Its subcellular location is the cell membrane. The enzyme catalyses GTP + H2O = GDP + phosphate + H(+). Ras proteins bind GDP/GTP and possess intrinsic GTPase activity. This chain is Ras-like protein rasS (rasS), found in Dictyostelium discoideum (Social amoeba).